Here is a 755-residue protein sequence, read N- to C-terminus: Polycomb protein SUZ12 (755 aa).

3 disordered regions span residues 26-79, 333-377, and 392-420; these read KMGN…RRIS, NANG…SRRA, and AVGR…SDDR. A compositionally biased stretch (low complexity) spans 30-42; it reads KASSQAQKRSQSQ. Composition is skewed to polar residues over residues 43-57 and 349-359; these read TGDS…DGSG and TQPNGTHNEGT. Residues 411-420 show a composition bias toward basic and acidic residues; it reads GEDHPPSDDR. Residues 436–458 form a C2H2-type zinc finger; sequence FACLICGAENERLSQLRAHYMCH. The segment at 580–645 is polycomb protein VEFS-Box; sequence IDDSWLLLKH…KADWLVSKRS (66 aa).

Belongs to the VEFS (VRN2-EMF2-FIS2-SU(Z)12) family. In terms of assembly, component of the polycomb repressive complex 2 (PRC2) that consists of four core subunits icluding EZH2, EED, SUZ12, and RBBP4, among which EZH2 is the catalytic subunit and which minimally requires EED and SUZ12 for catalysis.

The protein localises to the nucleus. Functionally, component of the of the Polycomb Repressive Complex 2 (PRC2), a histone H3 lysine methyltransferase responsible for generating mono-, di-, and tri-methylation on Lys27 (H3K27me1, H3K27me2 and H3K27me3). The tri-methylated form is known to be critical in gene repression, and its proper placement is essential in defining repression patterns during development. SUZ12 is not a catalytic subunit but is required for the complex regulation of histone H3 lysine methylation by EZH2. The sequence is that of Polycomb protein SUZ12 from Chaetomium thermophilum (strain DSM 1495 / CBS 144.50 / IMI 039719) (Thermochaetoides thermophila).